The sequence spans 204 residues: Leucyl/phenylalanyl-tRNA--protein transferase (204 aa).

It belongs to the L/F-transferase family.

The protein resides in the cytoplasm. The enzyme catalyses N-terminal L-lysyl-[protein] + L-leucyl-tRNA(Leu) = N-terminal L-leucyl-L-lysyl-[protein] + tRNA(Leu) + H(+). It carries out the reaction N-terminal L-arginyl-[protein] + L-leucyl-tRNA(Leu) = N-terminal L-leucyl-L-arginyl-[protein] + tRNA(Leu) + H(+). It catalyses the reaction L-phenylalanyl-tRNA(Phe) + an N-terminal L-alpha-aminoacyl-[protein] = an N-terminal L-phenylalanyl-L-alpha-aminoacyl-[protein] + tRNA(Phe). Functions in the N-end rule pathway of protein degradation where it conjugates Leu, Phe and, less efficiently, Met from aminoacyl-tRNAs to the N-termini of proteins containing an N-terminal arginine or lysine. This is Leucyl/phenylalanyl-tRNA--protein transferase from Brucella abortus (strain 2308).